Consider the following 762-residue polypeptide: Homeobox-leucine zipper protein MERISTEM L1 (762 aa).

Positions 13 to 72 are disordered; sequence MFDMTPKNSENDLGITGSHEEDFETKSGAEVTMENPLEEELQDPNQRPNKKKRYHRHTQR. Basic and acidic residues predominate over residues 30 to 39; that stretch reads SHEEDFETKS. Residues 60 to 71 are compositionally biased toward basic residues; the sequence is PNKKKRYHRHTQ. Residues 62–121 constitute a DNA-binding region (homeobox); it reads KKKRYHRHTQRQIQELESFFKECPHPDDKQRKELSRELSLEPLQVKFWFQNKRTQMKAQH. Positions 110-192 form a coiled coil; sequence FQNKRTQMKA…DRISAIAAKY (83 aa). Positions 253–484 constitute an START domain; it reads SEADKPMIVE…LDRQCERLAS (232 aa).

This sequence belongs to the HD-ZIP homeobox family. Class IV subfamily. Interacts with GAI/RGA2, RGA/RGA1/GRS, RGL2/SCL19 and PDF2. Interacts with AIL7/PLT7, ANT, BBM and AIL1.

The protein resides in the nucleus. Its function is as follows. Probable transcription factor involved in cell specification and pattern formation during embryogenesis. Binds to the L1 box DNA sequence 5'-TAAATG[CT]A-3'. Plays a role in maintaining the identity of L1 cells, possibly by interacting with their L1 box or other target-gene promoters; binds to the LIP1 gene promoter and stimulates its expression upon imbibition. Acts as a positive regulator of gibberellins (GAs)-regulated epidermal gene expression (e.g. LIP1, LIP2, LTP1, FDH and PDF1). Functionally redundant to PDF2. Seems to promote cell differentiation. The sequence is that of Homeobox-leucine zipper protein MERISTEM L1 from Arabidopsis thaliana (Mouse-ear cress).